Consider the following 276-residue polypeptide: uncharacterized protein (276 aa).

Residues 1–20 (MMSDEQHQGGDGQTTTNTNT) are disordered.

This is an uncharacterized protein from Dictyostelium discoideum (Social amoeba).